The following is a 321-amino-acid chain: Queuosine 5'-phosphate N-glycosylase/hydrolase (321 aa).

Phe-227, Asp-229, and Asp-296 together coordinate queuine. The Nucleophile or transition state stabilizer role is filled by Asp-229.

This sequence belongs to the QNG1 protein family.

The catalysed reaction is queuosine 5'-phosphate + H2O = queuine + D-ribose 5-phosphate. Functionally, catalyzes the hydrolysis of queuosine 5'-phosphate, releasing the nucleobase queuine (q). Is required for salvage of queuine from exogenous queuosine (Q) that is imported and then converted to queuosine 5'-phosphate intracellularly. The sequence is that of Queuosine 5'-phosphate N-glycosylase/hydrolase from Dictyostelium discoideum (Social amoeba).